The primary structure comprises 555 residues: 1,3-beta-glucanosyltransferase GAS2 (555 aa).

An N-terminal signal peptide occupies residues 1–24 (MNKKQNFYAAIIVAIFLCLQLSHG). Cysteine 89 and cysteine 118 are disulfide-bonded. Residues tyrosine 107, 134–142 (SEPDISINR), asparagine 175, glutamate 176, aspartate 217, and arginine 222 contribute to the (1,3-beta-D-glucosyl)n site. The active-site Proton donor is glutamate 176. 6 disulfides stabilise this stretch: cysteine 231–cysteine 367, cysteine 247–cysteine 278, cysteine 390–cysteine 442, cysteine 392–cysteine 489, cysteine 399–cysteine 466, and cysteine 419–cysteine 424. Glutamate 275 serves as the catalytic Nucleophile. Residue tyrosine 307 coordinates (1,3-beta-D-glucosyl)n. N-linked (GlcNAc...) asparagine glycosylation occurs at asparagine 498. The GPI-anchor amidated aspartate moiety is linked to residue aspartate 531. A propeptide spans 532–555 (GTIAFKTSGFVILLISMIAAGILL) (removed in mature form).

Belongs to the glycosyl hydrolase 72 family. In terms of processing, N-glycosylated.

The protein resides in the cell membrane. Its function is as follows. Splits internally a 1,3-beta-glucan molecule and transfers the newly generated reducing end (the donor) to the non-reducing end of another 1,3-beta-glucan molecule (the acceptor) forming a 1,3-beta linkage, resulting in the elongation of 1,3-beta-glucan chains in the cell wall. Involved in spore wall assembly. This Saccharomyces cerevisiae (strain ATCC 204508 / S288c) (Baker's yeast) protein is 1,3-beta-glucanosyltransferase GAS2 (GAS2).